Here is a 236-residue protein sequence, read N- to C-terminus: Ubiquinone biosynthesis O-methyltransferase (236 aa).

Arg-39, Gly-59, Asp-80, and Met-124 together coordinate S-adenosyl-L-methionine.

It belongs to the methyltransferase superfamily. UbiG/COQ3 family.

The catalysed reaction is a 3-demethylubiquinol + S-adenosyl-L-methionine = a ubiquinol + S-adenosyl-L-homocysteine + H(+). It catalyses the reaction a 3-(all-trans-polyprenyl)benzene-1,2-diol + S-adenosyl-L-methionine = a 2-methoxy-6-(all-trans-polyprenyl)phenol + S-adenosyl-L-homocysteine + H(+). Its pathway is cofactor biosynthesis; ubiquinone biosynthesis. Its function is as follows. O-methyltransferase that catalyzes the 2 O-methylation steps in the ubiquinone biosynthetic pathway. The chain is Ubiquinone biosynthesis O-methyltransferase from Shewanella oneidensis (strain ATCC 700550 / JCM 31522 / CIP 106686 / LMG 19005 / NCIMB 14063 / MR-1).